The following is a 1271-amino-acid chain: Clustered mitochondria protein homolog (1271 aa).

TPR repeat units follow at residues 104–138 and 502–535; these read RHKP…ELGE and CYGL…KPHK. Residues 329–580 form the Clu domain; the sequence is DQSRPQLSIL…RSTPLDIDFI (252 aa). Basic and acidic residues predominate over residues 729 to 763; that stretch reads QEEKSKIEDNEKAIEEEKKEEKTEKKEEKEEKADE. A disordered region spans residues 729–783; that stretch reads QEEKSKIEDNEKAIEEEKKEEKTEKKEEKEEKADEEKSENEEDKTKPEEPSKGVF. TPR repeat units follow at residues 1067–1100, 1109–1142, and 1151–1184; these read ISSY…WDFV, VTTL…SEKI, and AMIH…FSRH. A disordered region spans residues 1212-1271; sequence QAKDKNKPKKVKAPPVPPQATTKKSKNKSKMAQTQISKLHLNSSTRFSSSSRVKPRLKKK. The segment covering 1241–1253 has biased composition (polar residues); it reads KMAQTQISKLHLN. Over residues 1254–1263 the composition is skewed to low complexity; the sequence is SSTRFSSSSR.

The protein belongs to the CLU family. May associate with the eukaryotic translation initiation factor 3 (eIF-3) complex.

It is found in the cytoplasm. Functionally, mRNA-binding protein involved in proper cytoplasmic distribution of mitochondria. The protein is Clustered mitochondria protein homolog of Meyerozyma guilliermondii (strain ATCC 6260 / CBS 566 / DSM 6381 / JCM 1539 / NBRC 10279 / NRRL Y-324) (Yeast).